Here is an 837-residue protein sequence, read N- to C-terminus: Protein kintoun (837 aa).

Disordered regions lie at residues 100 to 119 (APSS…GSHW), 205 to 224 (LPGV…LPDF), 230 to 249 (YPAA…LQPA), and 363 to 515 (AAAP…GPGT). Residues 233–242 (APGPRAPSPP) are compositionally biased toward pro residues. The segment covering 428-442 (GEERVPKPGEQDLSR) has biased composition (basic and acidic residues). Over residues 445–459 (GSPPGSVEEPSPGGE) the composition is skewed to low complexity. Phosphoserine occurs at positions 461 and 467. The segment covering 484 to 498 (ESARGDSSVETREES) has biased composition (basic and acidic residues). Residues Ser640, Ser641, and Ser773 each carry the phosphoserine modification.

This sequence belongs to the PIH1 family. Kintoun subfamily. As to quaternary structure, interacts with CFAP300. Interacts with DNAAF4. Interacts with DNAAF6/PIH1D3. Interacts with DNAI2 and HSPA1A.

The protein localises to the cytoplasm. The protein resides in the dynein axonemal particle. Its function is as follows. Required for cytoplasmic pre-assembly of axonemal dyneins, thereby playing a central role in motility in cilia and flagella. Involved in pre-assembly of dynein arm complexes in the cytoplasm before intraflagellar transport loads them for the ciliary compartment. The chain is Protein kintoun from Homo sapiens (Human).